We begin with the raw amino-acid sequence, 578 residues long: MNIQALLSEKVRQAMIAAGAPADCEPQVRHSAKVQFGDYQANGMMAVAKKLGMTPRQLAEQVLTHLDLNGIASKVEIAGPGFINIFLDPAFLAEHVQQALASDRLGVSTPEKQTIVVDYSAPNVAKEMHVGHLRSTIIGDAAVRTLEFLGHKVIRANHVGDWGTQFGMLIAWLEKQQQENAGDEMELADLEGFYRDAKKHYDEDEEFAERARNYVVKLQSGDEYFREMWRKLVDITMTQNQITYDRLNVTLTRDDVMGESLYNPMLPGIVADLKAKGLAVESEGATVVFLDEFKNKEGEPMGVIIQKKDGGYLYTTTDIACAKYRYETLHADRVLYYIDSRQHQHLMQAWAIVRKAGYVPESVPLEHHMFGMMLGKDGKPFKTRAGGTVKLADLLDEALERARRLVAEKNPDMPADELEKLANAVGIGAVKYADLSKNRTTDYIFDWDNMLAFEGNTAPYMQYAYTRVLSVFRKAEINEEQLAAAPVIIREDREAQLAARLLQFEETLTVVAREGTPHVMCAYLYDLAGLFSGFYEHCPILSAENEEVRNSRLKLAQLTAKTLKLGLDTLGIETVERM.

Residues 122-132 (PNVAKEMHVGH) carry the 'HIGH' region motif.

The protein belongs to the class-I aminoacyl-tRNA synthetase family. As to quaternary structure, monomer.

Its subcellular location is the cytoplasm. The catalysed reaction is tRNA(Arg) + L-arginine + ATP = L-arginyl-tRNA(Arg) + AMP + diphosphate. The polypeptide is Arginine--tRNA ligase (Shigella sonnei (strain Ss046)).